We begin with the raw amino-acid sequence, 230 residues long: Ribonuclease 3 (230 aa).

Residues 6–135 enclose the RNase III domain; the sequence is VSELRARYGI…FNGALFLDQG (130 aa). A Mg(2+)-binding site is contributed by Glu-48. Residue Asp-52 is part of the active site. Mg(2+)-binding residues include Asp-121 and Glu-124. Glu-124 is a catalytic residue. One can recognise a DRBM domain in the interval 161–230; it reads DYKTNLQEFL…AKKALEQLKA (70 aa).

This sequence belongs to the ribonuclease III family. In terms of assembly, homodimer. It depends on Mg(2+) as a cofactor.

The protein localises to the cytoplasm. The catalysed reaction is Endonucleolytic cleavage to 5'-phosphomonoester.. In terms of biological role, digests double-stranded RNA. Involved in the processing of primary rRNA transcript to yield the immediate precursors to the large and small rRNAs (23S and 16S). Processes some mRNAs, and tRNAs when they are encoded in the rRNA operon. Processes pre-crRNA and tracrRNA of type II CRISPR loci if present in the organism. The sequence is that of Ribonuclease 3 from Latilactobacillus sakei subsp. sakei (strain 23K) (Lactobacillus sakei subsp. sakei).